Consider the following 305-residue polypeptide: MPLLKLWAGSLVMLAAVSLPLQAASPVKVGSKIDTEGALLGNIILQVLESHGVPTVNKVQLGTTPVVRGAITSGELDIYPEYTGNGAFFFKDENDAAWKNAQQGYEKVKKLDSEHNKLIWLTPAPANNTWTIAVRQDVAEKNKLTSLADLSRYLQEGGTFKLAASAEFIERADALPAFEKAYGFKLGQDQLLSLAGGDTAVTIKAAAQQTSGVNAAMAYGTDGPVAALGLQTLSDPQGVQPIYAPAPVVRESVLREYPQMAQWLQPVFASLDAKTLQQLNASIAVEGLDAKKVAADYLKQKGWTK.

An N-terminal signal peptide occupies residues methionine 1–alanine 23.

The protein belongs to the OsmX family. The complex is composed of two ATP-binding proteins (YehX), two transmembrane proteins (YehW and YehY) and a solute-binding protein (YehZ).

The protein localises to the periplasm. Functionally, part of an ABC transporter complex involved in low-affinity glycine betaine uptake. Binds glycine betaine with low affinity. The protein is Glycine betaine-binding protein YehZ (yehZ) of Escherichia coli (strain K12).